The sequence spans 580 residues: Arginine--tRNA ligase (580 aa).

The 'HIGH' region motif lies at 131–141 (ANPTGPLHVGH).

Belongs to the class-I aminoacyl-tRNA synthetase family. In terms of assembly, monomer.

The protein resides in the cytoplasm. It carries out the reaction tRNA(Arg) + L-arginine + ATP = L-arginyl-tRNA(Arg) + AMP + diphosphate. This Roseobacter denitrificans (strain ATCC 33942 / OCh 114) (Erythrobacter sp. (strain OCh 114)) protein is Arginine--tRNA ligase.